Consider the following 527-residue polypeptide: tRNA-2-methylthio-N(6)-dimethylallyladenosine synthase (527 aa).

The disordered stretch occupies residues 1–27 (MMNEKQRLQYTAQIETDHPTDKKSALD). Residues 15–27 (ETDHPTDKKSALD) are compositionally biased toward basic and acidic residues. One can recognise an MTTase N-terminal domain in the interval 84-202 (RKFYIRTYGC…LPYILKEAYM (119 aa)). [4Fe-4S] cluster is bound by residues C93, C129, C163, C239, C243, and C246. In terms of domain architecture, Radical SAM core spans 225–455 (RKGNIKAWVN…NALVNEISAK (231 aa)). Residues 458–521 (KEYEGQVVEV…TWTLNGEMVE (64 aa)) enclose the TRAM domain.

It belongs to the methylthiotransferase family. MiaB subfamily. Monomer. [4Fe-4S] cluster serves as cofactor.

Its subcellular location is the cytoplasm. It catalyses the reaction N(6)-dimethylallyladenosine(37) in tRNA + (sulfur carrier)-SH + AH2 + 2 S-adenosyl-L-methionine = 2-methylsulfanyl-N(6)-dimethylallyladenosine(37) in tRNA + (sulfur carrier)-H + 5'-deoxyadenosine + L-methionine + A + S-adenosyl-L-homocysteine + 2 H(+). Functionally, catalyzes the methylthiolation of N6-(dimethylallyl)adenosine (i(6)A), leading to the formation of 2-methylthio-N6-(dimethylallyl)adenosine (ms(2)i(6)A) at position 37 in tRNAs that read codons beginning with uridine. The sequence is that of tRNA-2-methylthio-N(6)-dimethylallyladenosine synthase from Anoxybacillus flavithermus (strain DSM 21510 / WK1).